We begin with the raw amino-acid sequence, 185 residues long: ATP-dependent protease subunit HslV (185 aa).

Threonine 12 is a catalytic residue. Na(+) is bound by residues alanine 168, cysteine 171, and threonine 174.

It belongs to the peptidase T1B family. HslV subfamily. As to quaternary structure, a double ring-shaped homohexamer of HslV is capped on each side by a ring-shaped HslU homohexamer. The assembly of the HslU/HslV complex is dependent on binding of ATP.

The protein resides in the cytoplasm. The catalysed reaction is ATP-dependent cleavage of peptide bonds with broad specificity.. Allosterically activated by HslU binding. Functionally, protease subunit of a proteasome-like degradation complex believed to be a general protein degrading machinery. This chain is ATP-dependent protease subunit HslV, found in Ruegeria pomeroyi (strain ATCC 700808 / DSM 15171 / DSS-3) (Silicibacter pomeroyi).